Here is a 368-residue protein sequence, read N- to C-terminus: MEIDIEKLPIIDISSFQNNENDKNQVAKEINKACKEYGFFYIKNHGVDQELIENLQNVIKKFFSLPLEIKMKWKMGLTNREWLGFFKVGQEITYGQVDWKEGCYYSSEMDGDINTIHNVPLYPTAEQEEQYEIQGFKSTIHTYIEKLTHLSQQIIEAISLSLNLPQDYFFKNYTYDPFILMGLLHYPSFHHQEQEEEQEDDESNNGGKKSPNPDESKKPEVEKFGTGQHTDWGLLTVLYQDDVGGLQVKSKNSEEYIDAPPIPGTFICNIGDMLDKMTGGYYLSNLHRVKYNKSGRDRFSIPFFLDPSLNSIPKLIPNYDQLSQFADKPERWDKQNIHEFDGTYGQYFIKKIGRVFPDYVYKKSGELV.

The 131-residue stretch at 177 to 307 (PFILMGLLHY…RFSIPFFLDP (131 aa)) folds into the Fe2OG dioxygenase domain. Residues 191 to 226 (HQEQEEEQEDDESNNGGKKSPNPDESKKPEVEKFGT) are disordered. Over residues 194–203 (QEEEQEDDES) the composition is skewed to acidic residues. A compositionally biased stretch (basic and acidic residues) spans 211–223 (PNPDESKKPEVEK). Fe cation is bound by residues histidine 229, aspartate 231, and histidine 287. Arginine 298 is a 2-oxoglutarate binding site.

It belongs to the iron/ascorbate-dependent oxidoreductase family. Fe(2+) serves as cofactor.

It carries out the reaction 1-aminocyclopropane-1-carboxylate + L-ascorbate + O2 = ethene + L-dehydroascorbate + hydrogen cyanide + CO2 + 2 H2O. It participates in alkene biosynthesis; ethylene biosynthesis via S-adenosyl-L-methionine; ethylene from S-adenosyl-L-methionine: step 2/2. Involved in ethylene biosynthesis. Overexpression induces overproduction of ethylene. The sequence is that of 1-aminocyclopropane-1-carboxylate oxidase (aco) from Dictyostelium discoideum (Social amoeba).